A 248-amino-acid chain; its full sequence is Phosphatidylglycerol--prolipoprotein diacylglyceryl transferase (248 aa).

3 consecutive transmembrane segments (helical) span residues 6–26 (FTLFGIDIMWYGILMACGMIL), 47–67 (NIAIIAIPVGLICARIYYVVF), and 84–104 (GGGLAIHGGLIGGILAGYIYT). Residue Arg-130 coordinates a 1,2-diacyl-sn-glycero-3-phospho-(1'-sn-glycerol). 2 consecutive transmembrane segments (helical) span residues 186 to 206 (GQVIVTYITLYSIGRFFIEGL) and 218 to 238 (MAQVISLIGVIGGIIAHVYLS).

Belongs to the Lgt family.

The protein resides in the cell membrane. It catalyses the reaction L-cysteinyl-[prolipoprotein] + a 1,2-diacyl-sn-glycero-3-phospho-(1'-sn-glycerol) = an S-1,2-diacyl-sn-glyceryl-L-cysteinyl-[prolipoprotein] + sn-glycerol 1-phosphate + H(+). It functions in the pathway protein modification; lipoprotein biosynthesis (diacylglyceryl transfer). Functionally, catalyzes the transfer of the diacylglyceryl group from phosphatidylglycerol to the sulfhydryl group of the N-terminal cysteine of a prolipoprotein, the first step in the formation of mature lipoproteins. The chain is Phosphatidylglycerol--prolipoprotein diacylglyceryl transferase from Clostridioides difficile (strain 630) (Peptoclostridium difficile).